A 390-amino-acid polypeptide reads, in one-letter code: Ribosomal RNA large subunit methyltransferase G (390 aa).

It belongs to the methyltransferase superfamily. RlmG family.

It localises to the cytoplasm. The enzyme catalyses guanosine(1835) in 23S rRNA + S-adenosyl-L-methionine = N(2)-methylguanosine(1835) in 23S rRNA + S-adenosyl-L-homocysteine + H(+). Functionally, specifically methylates the guanine in position 1835 (m2G1835) of 23S rRNA. This Alcanivorax borkumensis (strain ATCC 700651 / DSM 11573 / NCIMB 13689 / SK2) protein is Ribosomal RNA large subunit methyltransferase G.